Consider the following 135-residue polypeptide: ATP synthase epsilon chain (135 aa).

A disordered region spans residues 91–122; that stretch reads EAQKQLSEAEQAWSKFDGQPNSPDKIKAQQAF.

Belongs to the ATPase epsilon chain family. In terms of assembly, F-type ATPases have 2 components, CF(1) - the catalytic core - and CF(0) - the membrane proton channel. CF(1) has five subunits: alpha(3), beta(3), gamma(1), delta(1), epsilon(1). CF(0) has three main subunits: a, b and c.

It is found in the cellular thylakoid membrane. In terms of biological role, produces ATP from ADP in the presence of a proton gradient across the membrane. The sequence is that of ATP synthase epsilon chain from Synechococcus sp. (strain RCC307).